Here is a 210-residue protein sequence, read N- to C-terminus: LexA repressor (210 aa).

Positions 28 to 48 form a DNA-binding region, H-T-H motif; that stretch reads FEEIAEGMGLSSLATVHKHIG. Active-site for autocatalytic cleavage activity residues include Ser-131 and Lys-169.

Belongs to the peptidase S24 family. In terms of assembly, homodimer.

The catalysed reaction is Hydrolysis of Ala-|-Gly bond in repressor LexA.. Represses a number of genes involved in the response to DNA damage (SOS response), including recA and lexA. In the presence of single-stranded DNA, RecA interacts with LexA causing an autocatalytic cleavage which disrupts the DNA-binding part of LexA, leading to derepression of the SOS regulon and eventually DNA repair. The sequence is that of LexA repressor from Koribacter versatilis (strain Ellin345).